We begin with the raw amino-acid sequence, 384 residues long: Prokineticin receptor 2 (384 aa).

The Extracellular segment spans residues 1-54 (MAAQNGNTSFTPNFNPPQDHASSLSFNFSYGDYDLPMDEDEDMTKTRTFFAAKI). Asparagine 7 and asparagine 27 each carry an N-linked (GlcNAc...) asparagine glycan. The helical transmembrane segment at 55 to 75 (VIGIALAGIMLVCGIGNFVFI) threads the bilayer. Over 76-89 (AALTRYKKLRNLTN) the chain is Cytoplasmic. Residues 90 to 110 (LLIANLAISDFLVAIICCPFE) form a helical membrane-spanning segment. The Extracellular portion of the chain corresponds to 111 to 136 (MDYYVVRQLSWEHGHVLCASVNYLRT). Cysteine 128 and cysteine 208 are disulfide-bonded. A helical transmembrane segment spans residues 137–157 (VSLYVSTNALLAIAIDRYLAI). The Cytoplasmic segment spans residues 158 to 171 (VHPLKPRMNYQTAS). The chain crosses the membrane as a helical span at residues 172 to 192 (FLIALVWMVSILIAIPSAYFA). Over 193–223 (TETVLFIVKSQEKIFCGQIWPVDQQLYYKSY) the chain is Extracellular. Residues 224–244 (FLFIFGVEFVGPVVTMTLCYA) traverse the membrane as a helical segment. Over 245–273 (RISRELWFKAVPGFQTEQIRKRLRCRRKT) the chain is Cytoplasmic. The helical transmembrane segment at 274–294 (VLVLMCILTAYVLCWAPFYGF) threads the bilayer. Over 295–313 (TIVRDFFPTVFVKEKHYLT) the chain is Extracellular. The chain crosses the membrane as a helical span at residues 314 to 334 (AFYVVECIAMSNSMINTVCFV). The Cytoplasmic segment spans residues 335-384 (TVKNNTMKYFKKMMLLHWRPSQRGSKSSADLDLRTNGVPTTEEVDCIRLK).

The protein belongs to the G-protein coupled receptor 1 family. As to quaternary structure, homodimer. In terms of tissue distribution, expressed in the ileocecum, thyroid gland, pituitary gland, salivary gland, adrenal gland, testis, ovary and brain.

Its subcellular location is the cell membrane. Receptor for prokineticin 2. Exclusively coupled to the G(q) subclass of heteromeric G proteins. Activation leads to mobilization of calcium, stimulation of phosphoinositide turnover and activation of p44/p42 mitogen-activated protein kinase. This Homo sapiens (Human) protein is Prokineticin receptor 2 (PROKR2).